Here is a 118-residue protein sequence, read N- to C-terminus: V-type proton ATPase subunit G 3 (118 aa).

The stretch at 3–54 forms a coiled coil; the sequence is SQSQGIQQLLQAEKRAKDKLEEAKKRKNKRLRQAKEEATADIDQYRLKREAD. Positions 19–39 are disordered; the sequence is KDKLEEAKKRKNKRLRQAKEE.

This sequence belongs to the V-ATPase G subunit family. As to quaternary structure, V-ATPase is a heteromultimeric enzyme made up of two complexes: the ATP-hydrolytic V1 complex and the proton translocation V0 complex. The V1 complex consists of three catalytic AB heterodimers that form a heterohexamer, three peripheral stalks each consisting of EG heterodimers, one central rotor including subunits D and F, and the regulatory subunits C and H. The proton translocation complex V0 consists of the proton transport subunit a, a ring of proteolipid subunits c9c'', rotary subunit d, subunits e and f, and two accessory subunits.

Functionally, subunit of the V1 complex of vacuolar(H+)-ATPase (V-ATPase), a multisubunit enzyme composed of a peripheral complex (V1) that hydrolyzes ATP and a membrane integral complex (V0) that translocates protons. V-ATPase is responsible for acidifying and maintaining the pH of intracellular compartments and in some cell types, is targeted to the plasma membrane, where it is responsible for acidifying the extracellular environment. This is V-type proton ATPase subunit G 3 (atp6v1g3) from Xenopus laevis (African clawed frog).